Consider the following 504-residue polypeptide: FAD-dependent monooxygenase nsrK (504 aa).

An FAD-binding site is contributed by Arg-146. The active site involves Arg-227. 2 residues coordinate FAD: Asp-340 and Gly-353.

Belongs to the paxM FAD-dependent monooxygenase family. Requires FAD as cofactor.

It participates in secondary metabolite biosynthesis. Functionally, FAD-dependent monooxygenase; part of the gene cluster that mediates the biosynthesis of the tetrahydroxanthone dimer neosartorin, which exhibits antibacterial activity. The two different monomeric units appear to be synthesized by the same set of enzymes, among which the Baeyer-Villiger monooxygenase nsrF is the key enzyme for the divergence of the biosynthetic routes. The pathway begins with the synthesis of atrochrysone thioester by the polyketide synthase nsrB. The atrochrysone carboxyl ACP thioesterase nsrC then breaks the thioester bond and releases the atrochrysone carboxylic acid from AacuL. Atrochrysone carboxylic acid is decarboxylated by the decarboxylase nsrE, and oxidized by the anthrone oxygenase nsrD to yield emodin. Emodin is then reduced to emodin hydroquinone by the oxidoreductase nsrR. A-ring reduction by the short chain dehydrogenase nsrJ, dehydration by the scytalone dehydratase-like protein nsrI and probable spontaneous re-oxidation, results in overall deoxygenation to chrysophanol. The Baeyer-Villiger monooxygenase nsrF accepts chrysophanol as a substrate to insert one oxygen atom at two different positions to yield the precursors of both monomric units. NsrF is promiscuous/flexible in interacting with the 2 (non methylated and methylated) aromatic rings of chrysophanol, thus diverging the biosynthetic pathway at this point. After the hydrolysis of the lactones, methylesterification by the methyltransferase nsrG yields respectively moniliphenone and 2,2',6'-trihydroxy-4-methyl-6-methoxya-cyldiphenylmethanone. The next steps are the hydroxylation by the FAD-dependent monooxygenase nsrK, followed by isomerization by the monooxygenase nsrQ. The short chain dehydrogenase/reductase nsrO then catalyzes the C-5 ketoreduction to give the xanthone skeleton of blennolide C and 5-acetylblennolide A. The acetyltransferase nsrL has a strict substrate specificity and uses only blennolide A but not blennolide C to yield 5-acetylblennolide A as the single-acetylated product. In the final step of the biosynthesis, the heterodimerization of the 2 xanthones, blennolide C and 5-acetylblennolide A, is catalyzed by the cytochrome P450 monooxygenase nsrP. NsrP can utilize at least three different xanthones as its substrates to perform the dimerization reaction. In Aspergillus novofumigatus (strain IBT 16806), this protein is FAD-dependent monooxygenase nsrK.